The sequence spans 73 residues: MPTKAGTKSTAHKKTTTKGPSKSPKGKTHATALHQGMLYKDMVNVAKSKGIPIYQNGSRLTKSELEKKIRRSK.

The tract at residues 1-35 (MPTKAGTKSTAHKKTTTKGPSKSPKGKTHATALHQ) is disordered.

This sequence belongs to the asfivirus P10 family.

The protein localises to the virion. Its function is as follows. May play a role in genome packaging through direct interaction with viral DNA. Binds to ssDNA and dsDNA with the same apparent affinity in vitro. The chain is Structural DNA-binding protein p10 from African swine fever virus (isolate Tick/Malawi/Lil 20-1/1983) (ASFV).